The primary structure comprises 533 residues: Na(+)/H(+) antiporter NhaB (533 aa).

The next 10 membrane-spanning stretches (helical) occupy residues 28–50 (FLII…VLVL), 67–87 (PGGL…SQVL), 96–116 (VLLL…LLLF), 131–165 (VSLM…FYSI), 254–274 (VPVL…GIFG), 316–336 (LIAG…SVII), 364–384 (LAVF…APVI), 396–416 (LVIF…VFVG), 454–474 (ATPN…APLI), and 481–501 (MVWM…MAIQ).

Belongs to the NhaB Na(+)/H(+) (TC 2.A.34) antiporter family.

Its subcellular location is the cell inner membrane. It catalyses the reaction 2 Na(+)(in) + 3 H(+)(out) = 2 Na(+)(out) + 3 H(+)(in). Its function is as follows. Na(+)/H(+) antiporter that extrudes sodium in exchange for external protons. The polypeptide is Na(+)/H(+) antiporter NhaB (Shewanella baltica (strain OS195)).